Here is a 268-residue protein sequence, read N- to C-terminus: MKFAVIGNPISHSLSPVMHRANFNSLGLDDTYEALNIPIEDFHLIKEIISKKELDGFNITIPHKERIIPYLDYVDEQAINAGAVNTVLIKDGKWIGYNTDGIGYVKGLHSVYPDLENAYILILGAGGASKGIAYELAKFVKPKLTVANRTMARFESWNLNINQISLADAEKYLAEFDIVINTTPAGMAGNNESIINLKHLSPNTLMSDIVYIPYKTPILEEAERKGNHIYNGLDMFVYQGAESFKIWTNKDADINSMKTAVLQQLKGE.

Shikimate is bound by residues 13-15 (SLS) and Thr-60. Catalysis depends on Lys-64, which acts as the Proton acceptor. Glu-76 provides a ligand contact to NADP(+). Shikimate contacts are provided by Asn-85 and Asp-100. Residues 124-128 (GAGGA), 148-153 (NRTMAR), and Ile-209 each bind NADP(+). Position 211 (Tyr-211) interacts with shikimate. NADP(+) is bound at residue Gly-232.

The protein belongs to the shikimate dehydrogenase family. Homodimer.

The enzyme catalyses shikimate + NADP(+) = 3-dehydroshikimate + NADPH + H(+). The protein operates within metabolic intermediate biosynthesis; chorismate biosynthesis; chorismate from D-erythrose 4-phosphate and phosphoenolpyruvate: step 4/7. Functionally, involved in the biosynthesis of the chorismate, which leads to the biosynthesis of aromatic amino acids. Catalyzes the reversible NADPH linked reduction of 3-dehydroshikimate (DHSA) to yield shikimate (SA). This Staphylococcus aureus (strain JH1) protein is Shikimate dehydrogenase (NADP(+)).